The following is a 487-amino-acid chain: Probable cytochrome P450 513B1 (487 aa).

A helical transmembrane segment spans residues 1–18 (MNLLVLSVILAIIIYLIF). Residue C433 participates in heme binding.

Belongs to the cytochrome P450 family. Requires heme as cofactor.

The protein resides in the membrane. This Dictyostelium discoideum (Social amoeba) protein is Probable cytochrome P450 513B1 (cyp513B1).